Reading from the N-terminus, the 204-residue chain is Urease accessory protein UreG (204 aa).

Position 12 to 19 (12 to 19) interacts with GTP; it reads GPVGSGKT.

The protein belongs to the SIMIBI class G3E GTPase family. UreG subfamily. In terms of assembly, homodimer. UreD, UreF and UreG form a complex that acts as a GTP-hydrolysis-dependent molecular chaperone, activating the urease apoprotein by helping to assemble the nickel containing metallocenter of UreC. The UreE protein probably delivers the nickel.

The protein resides in the cytoplasm. Its function is as follows. Facilitates the functional incorporation of the urease nickel metallocenter. This process requires GTP hydrolysis, probably effectuated by UreG. In Stutzerimonas stutzeri (strain A1501) (Pseudomonas stutzeri), this protein is Urease accessory protein UreG.